Reading from the N-terminus, the 851-residue chain is DNA mismatch repair protein MutS (851 aa).

602-609 (GPNMSGKS) is a binding site for ATP.

Belongs to the DNA mismatch repair MutS family.

This protein is involved in the repair of mismatches in DNA. It is possible that it carries out the mismatch recognition step. This protein has a weak ATPase activity. The polypeptide is DNA mismatch repair protein MutS (Streptococcus pyogenes serotype M49 (strain NZ131)).